Consider the following 732-residue polypeptide: Catalase-peroxidase (732 aa).

Residues 1 to 26 are disordered; that stretch reads MDAKTDDQGGKCPFPHGGGSRGHRNR. Residues 97–219 constitute a cross-link (tryptophyl-tyrosyl-methioninium (Trp-Tyr) (with M-245)); it reads WHSAGTYRTT…LGAVQMGLIY (123 aa). His-98 serves as the catalytic Proton acceptor. The tryptophyl-tyrosyl-methioninium (Tyr-Met) (with W-97) cross-link spans 219 to 245; it reads YVNPEGPNGNPDPVAAAKDIRETFARM. His-260 is a heme b binding site.

The protein belongs to the peroxidase family. Peroxidase/catalase subfamily. In terms of assembly, homodimer or homotetramer. Requires heme b as cofactor. Post-translationally, formation of the three residue Trp-Tyr-Met cross-link is important for the catalase, but not the peroxidase activity of the enzyme.

It carries out the reaction H2O2 + AH2 = A + 2 H2O. The catalysed reaction is 2 H2O2 = O2 + 2 H2O. Its function is as follows. Bifunctional enzyme with both catalase and broad-spectrum peroxidase activity. The protein is Catalase-peroxidase of Rhodopseudomonas palustris (strain BisB5).